Consider the following 493-residue polypeptide: Bifunctional protein GlmU (493 aa).

The pyrophosphorylase stretch occupies residues 1-246; the sequence is MTGELDVDGE…SWLVAGINDR (246 aa). UDP-N-acetyl-alpha-D-glucosamine-binding positions include 21 to 24, Lys-35, Gln-88, 93 to 94, 117 to 119, Gly-156, Glu-171, Asn-186, and Asn-244; these read LAAG, GT, and SGD. Residue Asp-119 participates in Mg(2+) binding. Asn-244 contacts Mg(2+). The linker stretch occupies residues 247–267; that stretch reads VQLTAAATELNARIIRRWQLA. The tract at residues 268–493 is N-acetyltransferase; it reads GVTIHDPRTT…DGPADDASDA (226 aa). Positions 349 and 367 each coordinate UDP-N-acetyl-alpha-D-glucosamine. The active-site Proton acceptor is His-379. The UDP-N-acetyl-alpha-D-glucosamine site is built by Tyr-382 and Asn-393. Residues Ala-396, 402-403, Ser-421, and Ala-439 contribute to the acetyl-CoA site; that span reads NY. The disordered stretch occupies residues 470–493; it reads RPGTPEARAAVEAADGPADDASDA.

In the N-terminal section; belongs to the N-acetylglucosamine-1-phosphate uridyltransferase family. The protein in the C-terminal section; belongs to the transferase hexapeptide repeat family. Homotrimer. Requires Mg(2+) as cofactor.

The protein localises to the cytoplasm. It catalyses the reaction alpha-D-glucosamine 1-phosphate + acetyl-CoA = N-acetyl-alpha-D-glucosamine 1-phosphate + CoA + H(+). The enzyme catalyses N-acetyl-alpha-D-glucosamine 1-phosphate + UTP + H(+) = UDP-N-acetyl-alpha-D-glucosamine + diphosphate. It participates in nucleotide-sugar biosynthesis; UDP-N-acetyl-alpha-D-glucosamine biosynthesis; N-acetyl-alpha-D-glucosamine 1-phosphate from alpha-D-glucosamine 6-phosphate (route II): step 2/2. The protein operates within nucleotide-sugar biosynthesis; UDP-N-acetyl-alpha-D-glucosamine biosynthesis; UDP-N-acetyl-alpha-D-glucosamine from N-acetyl-alpha-D-glucosamine 1-phosphate: step 1/1. Its pathway is bacterial outer membrane biogenesis; LPS lipid A biosynthesis. In terms of biological role, catalyzes the last two sequential reactions in the de novo biosynthetic pathway for UDP-N-acetylglucosamine (UDP-GlcNAc). The C-terminal domain catalyzes the transfer of acetyl group from acetyl coenzyme A to glucosamine-1-phosphate (GlcN-1-P) to produce N-acetylglucosamine-1-phosphate (GlcNAc-1-P), which is converted into UDP-GlcNAc by the transfer of uridine 5-monophosphate (from uridine 5-triphosphate), a reaction catalyzed by the N-terminal domain. This chain is Bifunctional protein GlmU, found in Clavibacter sepedonicus (Clavibacter michiganensis subsp. sepedonicus).